The following is a 512-amino-acid chain: 2-isopropylmalate synthase (512 aa).

Positions 5-268 (LIIFDTTLRD…DLGIATQHIL (264 aa)) constitute a Pyruvate carboxyltransferase domain. Mn(2+) is bound by residues Asp-14, His-202, His-204, and Asn-239. The tract at residues 394–512 (GFVSLFQQSE…NKADRVAAQG (119 aa)) is regulatory domain.

It belongs to the alpha-IPM synthase/homocitrate synthase family. LeuA type 1 subfamily. Homodimer. It depends on Mn(2+) as a cofactor.

Its subcellular location is the cytoplasm. It catalyses the reaction 3-methyl-2-oxobutanoate + acetyl-CoA + H2O = (2S)-2-isopropylmalate + CoA + H(+). The protein operates within amino-acid biosynthesis; L-leucine biosynthesis; L-leucine from 3-methyl-2-oxobutanoate: step 1/4. Catalyzes the condensation of the acetyl group of acetyl-CoA with 3-methyl-2-oxobutanoate (2-ketoisovalerate) to form 3-carboxy-3-hydroxy-4-methylpentanoate (2-isopropylmalate). The polypeptide is 2-isopropylmalate synthase (Verminephrobacter eiseniae (strain EF01-2)).